Reading from the N-terminus, the 349-residue chain is Nuclear distribution protein nudE homolog 1 (349 aa).

Residues 23-189 (AMKYKTCSEE…ELAVQQKQEK (167 aa)) adopt a coiled-coil conformation. The segment at 182-201 (AVQQKQEKPKSNMGSPETER) is disordered.

This sequence belongs to the nudE family. Self-associates. Interacts with pafah1b1. In terms of processing, phosphorylated in mitosis.

Its subcellular location is the cytoplasm. It is found in the cytoskeleton. The protein localises to the microtubule organizing center. It localises to the centrosome. The protein resides in the spindle. Its subcellular location is the chromosome. It is found in the centromere. The protein localises to the kinetochore. It localises to the cleavage furrow. The protein resides in the cytoplasmic vesicle membrane. Its function is as follows. Required for centrosome duplication and formation and function of the mitotic spindle. This Xenopus tropicalis (Western clawed frog) protein is Nuclear distribution protein nudE homolog 1 (nde1).